Here is a 394-residue protein sequence, read N- to C-terminus: Venom metalloproteinase antarease-like TtrivMP_A (394 aa).

Residues 1–16 (MISYLASIFLLATVSA) form the signal peptide. Residues 17 to 158 (VPSGRVEVVF…AENVSRMAEE (142 aa)) constitute a propeptide that is removed on maturation. Asn-151 carries an N-linked (GlcNAc...) asparagine glycan. The 229-residue stretch at 162-390 (IVVEYYIVTD…KPTAFCIFEQ (229 aa)) folds into the Peptidase M12B domain. Cys-295 and Cys-386 are joined by a disulfide. Zn(2+) is bound at residue His-319. Glu-320 is a catalytic residue. Residues His-323 and His-329 each coordinate Zn(2+).

The protein belongs to the venom metalloproteinase (M12B) family. The cofactor is Zn(2+). In terms of tissue distribution, expressed by the venom gland.

It localises to the secreted. Its activity is regulated as follows. Inhibited by EDTA. In terms of biological role, acts as a metalloprotease. Penetrates intact tissue and specifically cleaves the vesicle-associated membrane protein 2 (VAMP2) (part of the SNARE complex) involved in pancreatic secretion, thus disrupting the normal vesicular traffic. The protein is Venom metalloproteinase antarease-like TtrivMP_A of Tityus trivittatus (Argentinean scorpion).